The chain runs to 340 residues: L-galactonate-5-dehydrogenase (340 aa).

Residues Cys40, Cys65, Cys92, Cys95, Cys98, Cys106, and Glu146 each coordinate Zn(2+).

Belongs to the zinc-containing alcohol dehydrogenase family. Requires Zn(2+) as cofactor.

The enzyme catalyses L-galactonate + NAD(+) = keto-D-tagaturonate + NADH + H(+). Its activity is regulated as follows. Inhibited by EDTA. In terms of biological role, catalyzes the oxidation of L-galactonate to D-tagaturonate. Required for growth on L-galactonate as the sole carbon source. In vitro, can also use L-gulonate. This is L-galactonate-5-dehydrogenase (lgoD) from Escherichia coli (strain K12).